The sequence spans 1077 residues: Insulin receptor substrate 2-B (1077 aa).

Residues 1–66 (MAGVLCPTEE…APASTAEDDV (66 aa)) form a disordered region. 2 short sequence motifs (YXXM motif) span residues 33 to 36 (YRRM) and 147 to 150 (YFAM). The PH domain occupies 65–170 (DVRKRGYLRK…WYQALSELIN (106 aa)). Residues 195–299 (FKEVWQVNVK…DTMKALKAYS (105 aa)) enclose the IRS-type PTB domain. Disordered regions lie at residues 342 to 373 (ETVV…RPFR), 428 to 464 (VCSS…SDEY), and 476 to 495 (VRSN…EENT). 2 stretches are compositionally biased toward polar residues: residues 350 to 364 (SAKN…SSEG) and 428 to 444 (VCSS…LTRP). Residues 445 to 457 (SSSSVCGSPSDGG) are compositionally biased toward low complexity. Residues 477 to 495 (RSNTPDSLGNTPPIQEENT) are compositionally biased toward polar residues. Residues 499–502 (YMSM) carry the YXXM motif 3 motif. Positions 530–544 (KPTNAASQQKSQTAV) are enriched in polar residues. The disordered stretch occupies residues 530 to 571 (KPTNAASQQKSQTAVSLDEDSEETNKQFAYAESPKLKDSSHV). 6 short sequence motifs (YXXM motif) span residues 595-598 (YMPM), 608-611 (YLPM), 634-637 (YMMM), 666-669 (YMDM), 713-716 (YVPM), and 891-894 (YTTM).

Phosphorylated by INSR.

Functionally, potentiates insulin signaling. The chain is Insulin receptor substrate 2-B (irs2-b) from Xenopus laevis (African clawed frog).